Reading from the N-terminus, the 107-residue chain is Large ribosomal subunit protein uL23 (107 aa).

It belongs to the universal ribosomal protein uL23 family. In terms of assembly, part of the 50S ribosomal subunit. Contacts protein L29, and trigger factor when it is bound to the ribosome.

One of the early assembly proteins it binds 23S rRNA. One of the proteins that surrounds the polypeptide exit tunnel on the outside of the ribosome. Forms the main docking site for trigger factor binding to the ribosome. The protein is Large ribosomal subunit protein uL23 of Gluconobacter oxydans (strain 621H) (Gluconobacter suboxydans).